A 249-amino-acid chain; its full sequence is MIT domain-containing protein 1 (249 aa).

The MIT domain maps to 8-86 (QDSDSTAAVA…KYLDQEKEDG (79 aa)). An important for association with membranes region spans residues 168–231 (SGLEEIKQSL…SLGYYDLDLR (64 aa)).

As to quaternary structure, homodimer. Interacts (via MIT domain) with CHMP1A, CHMP1B, CHMP2A and IST1.

The protein resides in the late endosome membrane. It localises to the midbody. The protein localises to the membrane. Required for efficient abscission at the end of cytokinesis, together with components of the ESCRT-III complex. The chain is MIT domain-containing protein 1 (Mitd1) from Mus musculus (Mouse).